Consider the following 531-residue polypeptide: Protein SHORT-ROOT (531 aa).

The segment covering 14–39 (QQSDSIITNQSSLSRTSTTTTGSPQT) has biased composition (low complexity). Disordered stretches follow at residues 14–40 (QQSD…PQTA) and 65–103 (SSSS…PSST). Over residues 81 to 93 (TYYSPFTTPTQYH) the composition is skewed to polar residues. Over residues 94 to 103 (PATSSTPSST) the composition is skewed to low complexity. Positions 134–529 (FDFSANAKWA…QPVVWASAWR (396 aa)) constitute a GRAS domain. The leucine repeat I (LRI) stretch occupies residues 141 to 206 (KWADSVLLEA…GSGERCYRTM (66 aa)). The VHIID stretch occupies residues 225-290 (VLKFQEVSPW…DDTPHLRLTT (66 aa)). Residues 256–260 (IHIVD) carry the VHIID motif. Positions 310–343 (EIGNRMEKFARLMGVPFKFNIIHHVGDLSEFDLN) are leucine repeat II (LRII). Residues 353 to 449 (LAINCVGAMH…ERAAGRAIVD (97 aa)) form a PFYRE region. Residues 452–529 (ACEPSDSTER…QPVVWASAWR (78 aa)) are SAW.

This sequence belongs to the GRAS family. Interacts with SCR, SCL23, JKD and MGP. Interacts with SIEL. Association to endosomes and intercellular movement of SHR rely on the interaction with SIEL. In terms of tissue distribution, expressed in the stele and the quiescent center. Not detected in the ground tissue cell lineage. The SHR protein moves from the stele to a single layer of adjacent cells, where it enters the nucleus.

It is found in the cytoplasm. Its subcellular location is the nucleus. It localises to the early endosome. The protein localises to the late endosome. The protein resides in the recycling endosome. Functionally, transcription factor required for quiescent center cells specification and maintenance of surrounding stem cells, and for the asymmetric cell division involved in radial pattern formation in roots. Essential for both cell division and cell specification. Regulates the radial organization of the shoot axial organs and is required for normal shoot gravitropism. Directly controls the transcription of SCR, and when associated with SCR, of MGP, RLK, TRI, NUC and SCL3. This is Protein SHORT-ROOT from Arabidopsis thaliana (Mouse-ear cress).